We begin with the raw amino-acid sequence, 694 residues long: Heat shock protein HSP 90-alpha (694 aa).

2 positions are modified to phosphothreonine; by PRKDC: Thr5 and Thr7. Positions 9-236 are interaction with NR3C1; the sequence is DQPMEEEEVE…DKEVSDDEAK (228 aa). Asn51 contacts ATP. Residues Lys58 and Lys84 each carry the N6-acetyllysine modification. The ATP site is built by Asp93, Lys112, and Phe138. Residues 228–241 are compositionally biased toward basic and acidic residues; that stretch reads KEVSDDEAKQPDDK. Residues 228-275 form a disordered region; the sequence is KEVSDDEAKQPDDKPEIEDVGSDEEEEEKKDGDIDQEELNKTKPIWTR. Residues Ser231 and Ser249 each carry the phosphoserine modification. The span at 242-255 shows a compositional bias: acidic residues; that stretch reads PEIEDVGSDEEEEE. The span at 256–268 shows a compositional bias: basic and acidic residues; the sequence is KKDGDIDQEELNK. Positions 258–578 are interaction with NR3C1; the sequence is DGDIDQEELN…TANMERIMKA (321 aa). An interaction with FNIP2 and TSC1 region spans residues 261 to 582; it reads IDQEELNKTK…ERIMKAQALR (322 aa). An interaction with FLCN and FNIP1 region spans residues 261 to 694; it reads IDQEELNKTK…DDTSRMEEVD (434 aa). Position 289 is a phosphotyrosine (Tyr289). Position 376 (Arg376) interacts with ATP. An N6-acetyllysine modification is found at Lys419. At Ser429 the chain carries Phosphoserine. Lys434 is modified (N6-acetyllysine). A Phosphoserine modification is found at Ser452. Lys465 carries the N6-acetyllysine modification. Tyr468 carries the post-translational modification Phosphotyrosine. Lys547 is subject to N6-acetyllysine. An S-nitrosocysteine modification is found at Cys560. The interval 590-693 is interaction with NR1D1; the sequence is MAAKKHLEVN…DDDTSRMEEV (104 aa). Position 603 is a phosphoserine (Ser603). Positions 644-694 are required for homodimerization; that stretch reads QTHANRIYRMIKLGLGIDEDDPTADDTAAAVTEEMPPLEGDDDTSRMEEVD. Residues 662 to 694 are disordered; it reads EDDPTADDTAAAVTEEMPPLEGDDDTSRMEEVD. The segment covering 668–677 has biased composition (low complexity); that stretch reads DDTAAAVTEE. The TPR repeat-binding signature appears at 685–694; sequence DDTSRMEEVD. The interval 690–694 is essential for interaction with SMYD3, TSC1 and STIP1/HOP; sequence MEEVD. The essential for interaction with SGTA and TTC1 stretch occupies residues 691 to 694; the sequence is EEVD.

Belongs to the heat shock protein 90 family. As to quaternary structure, homodimer. Identified in NR3C1/GCR steroid receptor-chaperone complexes formed at least by NR3C1, HSP90AA1 and a variety of proteins containing TPR repeats such as FKBP4, FKBP5, PPID, PPP5C or STIP1. Forms a complex containing HSP90AA1, TSC1 and TSC2; TSC1 is required to recruit TCS2 to the complex. The closed form interacts (via the middle domain and TPR repeat-binding motif) with co-chaperone TSC1 (via C-terminus). Interacts with TOM34. Interacts with TERT; the interaction, together with PTGES3, is required for correct assembly and stabilization of the TERT holoenzyme complex. Interacts with CHORDC1 and DNAJC7. Interacts with STUB1 and UBE2N; may couple the chaperone and ubiquitination systems. Interacts (via TPR repeat-binding motif) with PPP5C (via TPR repeats); the interaction is direct and activates PPP5C phosphatase activity. Following LPS binding, may form a complex with CXCR4, GDF5 and HSPA8. Interacts with KSR1. Interacts with co-chaperone CDC37 (via C-terminus); the interaction inhibits HSP90AA1 ATPase activity. May interact with NWD1. Interacts with FNIP1 and FNIP2; the interaction inhibits HSP90AA1 ATPase activity. Interacts with co-chaperone AHSA1 (phosphorylated on 'Tyr-223'); the interaction activates HSP90AA1 ATPase activity and results in the dissociation of TSC1 from HSP90AA1. Interacts with FLCN in the presence of FNIP1. Interacts with HSP70, STIP1 and PTGES3. Interacts with SMYD3; this interaction enhances SMYD3 histone-lysine N-methyltransferase. Interacts with SGTA (via TPR repeats). Interacts with TTC1 (via TPR repeats). Interacts with HSF1 in an ATP-dependent manner. Interacts with MET; the interaction suppresses MET kinase activity. Interacts with ERBB2 in an ATP-dependent manner; the interaction suppresses ERBB2 kinase activity. Interacts with HIF1A, KEAP1 and RHOBTB2. Interacts with HSF1; this interaction is decreased in a IER5-dependent manner, promoting HSF1 accumulation in the nucleus, homotrimerization and DNA-binding activities. Interacts with STUB1 and SMAD3. Interacts with HSP90AB1; interaction is constitutive. Interacts with HECTD1 (via N-terminus). Interacts with NR3C1 (via domain NR LBD) and NR1D1 (via domain NR LBD). Interacts with NLPR12. Interacts with PDCL3. Interacts with TOMM70; the interaction is required for preprotein mitochondrial import. Interacts with TOMM70, IRF3 and TBK1; the interactions are direct and mediate the association of TOMM70 with IRF3 and TBK1. Forms a complex with ASL, ASS1 and NOS2; the complex regulates cell-autonomous L-arginine synthesis and citrulline recycling while channeling extracellular L-arginine to nitric oxide synthesis pathway. ISGylated. In terms of processing, S-nitrosylated; negatively regulates the ATPase activity and the activation of eNOS by HSP90AA1. Post-translationally, ubiquitinated via 'Lys-63'-linked polyubiquitination by HECTD1. Ubiquitination promotes translocation into the cytoplasm away from the membrane and secretory pathways.

The protein resides in the nucleus. The protein localises to the cytoplasm. Its subcellular location is the melanosome. It localises to the cell membrane. It is found in the mitochondrion. The catalysed reaction is ATP + H2O = ADP + phosphate + H(+). In the resting state, through the dimerization of its C-terminal domain, HSP90 forms a homodimer which is defined as the open conformation. Upon ATP-binding, the N-terminal domain undergoes significant conformational changes and comes in contact to form an active closed conformation. After HSP90 finishes its chaperoning tasks of assisting the proper folding, stabilization and activation of client proteins under the active state, ATP molecule is hydrolyzed to ADP which then dissociates from HSP90 and directs the protein back to the resting state. Co-chaperone TSC1 promotes ATP binding and inhibits HSP90AA1 ATPase activity. Binding to phosphorylated AHSA1 promotes HSP90AA1 ATPase activity. Inhibited by geldanamycin, Ganetespib (STA-9090) and SNX-2112. Functionally, molecular chaperone that promotes the maturation, structural maintenance and proper regulation of specific target proteins involved for instance in cell cycle control and signal transduction. Undergoes a functional cycle that is linked to its ATPase activity which is essential for its chaperone activity. This cycle probably induces conformational changes in the client proteins, thereby causing their activation. Interacts dynamically with various co-chaperones that modulate its substrate recognition, ATPase cycle and chaperone function. Engages with a range of client protein classes via its interaction with various co-chaperone proteins or complexes, that act as adapters, simultaneously able to interact with the specific client and the central chaperone itself. Recruitment of ATP and co-chaperone followed by client protein forms a functional chaperone. After the completion of the chaperoning process, properly folded client protein and co-chaperone leave HSP90 in an ADP-bound partially open conformation and finally, ADP is released from HSP90 which acquires an open conformation for the next cycle. Plays a critical role in mitochondrial import, delivers preproteins to the mitochondrial import receptor TOMM70. Apart from its chaperone activity, it also plays a role in the regulation of the transcription machinery. HSP90 and its co-chaperones modulate transcription at least at three different levels. In the first place, they alter the steady-state levels of certain transcription factors in response to various physiological cues. Second, they modulate the activity of certain epigenetic modifiers, such as histone deacetylases or DNA methyl transferases, and thereby respond to the change in the environment. Third, they participate in the eviction of histones from the promoter region of certain genes and thereby turn on gene expression. Binds bacterial lipopolysaccharide (LPS) and mediates LPS-induced inflammatory response, including TNF secretion by monocytes. Antagonizes STUB1-mediated inhibition of TGF-beta signaling via inhibition of STUB1-mediated SMAD3 ubiquitination and degradation. Mediates the association of TOMM70 with IRF3 or TBK1 in mitochondrial outer membrane which promotes host antiviral response. The polypeptide is Heat shock protein HSP 90-alpha (HSP90AA1) (Oryctolagus cuniculus (Rabbit)).